We begin with the raw amino-acid sequence, 427 residues long: Serine--tRNA ligase (427 aa).

231-233 (TAE) contacts L-serine. 262 to 264 (RSE) provides a ligand contact to ATP. Glu-285 is a binding site for L-serine. 349-352 (EISS) contributes to the ATP binding site. Ser-385 provides a ligand contact to L-serine.

Belongs to the class-II aminoacyl-tRNA synthetase family. Type-1 seryl-tRNA synthetase subfamily. In terms of assembly, homodimer. The tRNA molecule binds across the dimer.

Its subcellular location is the cytoplasm. It catalyses the reaction tRNA(Ser) + L-serine + ATP = L-seryl-tRNA(Ser) + AMP + diphosphate + H(+). The enzyme catalyses tRNA(Sec) + L-serine + ATP = L-seryl-tRNA(Sec) + AMP + diphosphate + H(+). Its pathway is aminoacyl-tRNA biosynthesis; selenocysteinyl-tRNA(Sec) biosynthesis; L-seryl-tRNA(Sec) from L-serine and tRNA(Sec): step 1/1. In terms of biological role, catalyzes the attachment of serine to tRNA(Ser). Is also able to aminoacylate tRNA(Sec) with serine, to form the misacylated tRNA L-seryl-tRNA(Sec), which will be further converted into selenocysteinyl-tRNA(Sec). The protein is Serine--tRNA ligase of Rhizobium rhizogenes (strain K84 / ATCC BAA-868) (Agrobacterium radiobacter).